Reading from the N-terminus, the 553-residue chain is Hydroxylamine reductase (553 aa).

Residues cysteine 3, cysteine 6, cysteine 18, and cysteine 25 each contribute to the [2Fe-2S] cluster site. Hybrid [4Fe-2O-2S] cluster contacts are provided by histidine 252, glutamate 276, cysteine 320, cysteine 408, cysteine 436, cysteine 461, glutamate 495, and lysine 497. Cysteine 408 is modified (cysteine persulfide).

Belongs to the HCP family. [2Fe-2S] cluster is required as a cofactor. Requires hybrid [4Fe-2O-2S] cluster as cofactor.

The protein localises to the cytoplasm. The catalysed reaction is A + NH4(+) + H2O = hydroxylamine + AH2 + H(+). Functionally, catalyzes the reduction of hydroxylamine to form NH(3) and H(2)O. In Vibrio parahaemolyticus serotype O3:K6 (strain RIMD 2210633), this protein is Hydroxylamine reductase.